Here is a 395-residue protein sequence, read N- to C-terminus: Putative carbonic anhydrase 1 (395 aa).

The first 24 residues, 1–24 (MKLQGAGCVVAAVLGALFIVNVES), serve as a signal peptide directing secretion. The region spanning 42 to 365 (ISYDVRSTIG…LNDRPVFLVR (324 aa)) is the Alpha-carbonic anhydrase domain. 3 residues coordinate Zn(2+): His139, His141, and His165.

This sequence belongs to the alpha-carbonic anhydrase family. Requires Zn(2+) as cofactor. In terms of tissue distribution, component of the acid-insoluble and acid-soluble organic matrix of calcified layers of the shell (at protein level).

The protein resides in the secreted. The enzyme catalyses hydrogencarbonate + H(+) = CO2 + H2O. Reversible hydration of carbon dioxide. The chain is Putative carbonic anhydrase 1 from Lottia gigantea (Giant owl limpet).